A 161-amino-acid polypeptide reads, in one-letter code: Dihydrofolate reductase (161 aa).

Positions 2 to 161 constitute a DHFR domain; it reads KISLISAISN…YNFCFEILSR (160 aa). A substrate-binding site is contributed by 6–8; sequence ISA. NADP(+)-binding positions include 7-8 and 15-20; these read SA and IGHNNK. Aspartate 28 is a substrate binding site. 44-47 is an NADP(+) binding site; sequence GRLT. Residue arginine 59 participates in substrate binding. Residues 64–66 and 96–101 each bind NADP(+); these read ISH and IGGSKI. Threonine 115 is a substrate binding site.

It belongs to the dihydrofolate reductase family.

It catalyses the reaction (6S)-5,6,7,8-tetrahydrofolate + NADP(+) = 7,8-dihydrofolate + NADPH + H(+). Its pathway is cofactor biosynthesis; tetrahydrofolate biosynthesis; 5,6,7,8-tetrahydrofolate from 7,8-dihydrofolate: step 1/1. In terms of biological role, key enzyme in folate metabolism. Catalyzes an essential reaction for de novo glycine and purine synthesis, and for DNA precursor synthesis. The sequence is that of Dihydrofolate reductase (folA) from Buchnera aphidicola subsp. Schizaphis graminum (strain Sg).